The sequence spans 133 residues: Small ribosomal subunit protein uS8 (133 aa).

This sequence belongs to the universal ribosomal protein uS8 family. In terms of assembly, part of the 30S ribosomal subunit. Contacts proteins S5 and S12.

Functionally, one of the primary rRNA binding proteins, it binds directly to 16S rRNA central domain where it helps coordinate assembly of the platform of the 30S subunit. The polypeptide is Small ribosomal subunit protein uS8 (Synechocystis sp. (strain ATCC 27184 / PCC 6803 / Kazusa)).